The primary structure comprises 467 residues: UDP-N-acetylmuramate--L-alanine ligase (467 aa).

114–120 (GTHGKTT) serves as a coordination point for ATP.

This sequence belongs to the MurCDEF family.

Its subcellular location is the cytoplasm. The enzyme catalyses UDP-N-acetyl-alpha-D-muramate + L-alanine + ATP = UDP-N-acetyl-alpha-D-muramoyl-L-alanine + ADP + phosphate + H(+). It functions in the pathway cell wall biogenesis; peptidoglycan biosynthesis. In terms of biological role, cell wall formation. The protein is UDP-N-acetylmuramate--L-alanine ligase of Rhodopseudomonas palustris (strain BisB5).